We begin with the raw amino-acid sequence, 614 residues long: Zinc metalloproteinase dpy-31 (614 aa).

The first 24 residues, 1–24 (MSLLRCTTLLLVVVAIALPPCILG), serve as a signal peptide directing secretion. Positions 25–150 (YSLHDGSRLD…KTGQRRVKRK (126 aa)) are excised as a propeptide. In terms of domain architecture, Peptidase M12A spans 150 to 349 (KFIGSDLRRW…IRLMNKIYCS (200 aa)). N-linked (GlcNAc...) asparagine glycosylation occurs at Asn-190. 5 cysteine pairs are disulfide-bonded: Cys-193/Cys-348, Cys-216/Cys-237, Cys-352/Cys-372, Cys-374/Cys-383, and Cys-394/Cys-422. His-245 is a Zn(2+) binding site. Glu-246 is a catalytic residue. Zn(2+) contacts are provided by His-249 and His-255. Positions 344-384 (NKIYCSNVCSRKLPCQRGGYTDPRRCDRCRCPDGFTGQFCE) constitute an EGF-like domain. In terms of domain architecture, CUB spans 394 to 510 (CGGRIQVNGG…RGFEARARAL (117 aa)). Asn-461 carries an N-linked (GlcNAc...) asparagine glycan. Residues 513–562 (NGQWASWSPWTPCTASCGACGSRMRTRVCSHGACAGEPVENQVCNTHPCN) form the TSP type-1 domain. 3 cysteine pairs are disulfide-bonded: Cys-525-Cys-556, Cys-529-Cys-561, and Cys-541-Cys-546.

Zn(2+) serves as cofactor.

It is found in the secreted. With respect to regulation, inhibited by marimastat and tripeptide hydroxamic acids. Inhibited by 1,10-phenanthroline. In terms of biological role, metalloprotease which cleaves the carboxyl terminus of procollagens to mature collagens. Probably involved in cuticular collagen maturation. The protein is Zinc metalloproteinase dpy-31 of Teladorsagia circumcincta (Brown stomach worm).